Reading from the N-terminus, the 227-residue chain is MFS-type transporter FVEG_08288 (227 aa).

The chain crosses the membrane as a helical span at residues 8 to 28 (VFLTVLIAIASCSVYILNIAI). N40 is a glycosylation site (N-linked (GlcNAc...) asparagine). 5 consecutive transmembrane segments (helical) span residues 43–63 (TVGL…MAGG), 100–120 (VANT…YYGV), 122–142 (FMVP…HFTL), 164–181 (FVRN…APWM), and 188–208 (YMMT…IWLI).

The protein belongs to the major facilitator superfamily.

The protein localises to the membrane. Its function is as follows. MFS-type transporter; part of the Fusarium detoxification of benzoxazolinone cluster 1 (FDB1) involved in the degradation of benzoxazolinones produced by the host plant. Maize, wheat, and rye produce the 2 benzoxazinone phytoanticipins 2,4-dihy-droxy-7-methoxy-1,4-benzoxazin-3-one (DIMBOA) and 2,4-dihydroxy-1,4-benzoxazin-3-one (DIBOA) that, due to their inherent instability once released, spontaneously degrade to the more stable corresponding benzoxazolinones, 6-methoxy-2-benzoxazolinone (MBOA) and 2-benzoxazolinone (BOA), respectively. The chain is MFS-type transporter FVEG_08288 from Gibberella moniliformis (strain M3125 / FGSC 7600) (Maize ear and stalk rot fungus).